We begin with the raw amino-acid sequence, 185 residues long: Elongation factor P (185 aa).

Belongs to the elongation factor P family.

The protein resides in the cytoplasm. It functions in the pathway protein biosynthesis; polypeptide chain elongation. Its function is as follows. Involved in peptide bond synthesis. Stimulates efficient translation and peptide-bond synthesis on native or reconstituted 70S ribosomes in vitro. Probably functions indirectly by altering the affinity of the ribosome for aminoacyl-tRNA, thus increasing their reactivity as acceptors for peptidyl transferase. The protein is Elongation factor P of Geobacillus kaustophilus (strain HTA426).